The primary structure comprises 147 residues: Large ribosomal subunit protein bL9 (147 aa).

This sequence belongs to the bacterial ribosomal protein bL9 family.

Functionally, binds to the 23S rRNA. The sequence is that of Large ribosomal subunit protein bL9 from Geotalea daltonii (strain DSM 22248 / JCM 15807 / FRC-32) (Geobacter daltonii).